A 75-amino-acid polypeptide reads, in one-letter code: Small ribosomal subunit protein bS18 (75 aa).

The protein belongs to the bacterial ribosomal protein bS18 family. As to quaternary structure, part of the 30S ribosomal subunit. Forms a tight heterodimer with protein bS6.

Functionally, binds as a heterodimer with protein bS6 to the central domain of the 16S rRNA, where it helps stabilize the platform of the 30S subunit. In Thermotoga sp. (strain RQ2), this protein is Small ribosomal subunit protein bS18.